The sequence spans 542 residues: Chaperonin GroEL (542 aa).

ATP-binding positions include 29-32 (TIGP), 86-90 (DGTTT), glycine 413, 477-479 (NAA), and aspartate 493.

The protein belongs to the chaperonin (HSP60) family. In terms of assembly, forms a cylinder of 14 subunits composed of two heptameric rings stacked back-to-back. Interacts with the co-chaperonin GroES.

The protein resides in the cytoplasm. The enzyme catalyses ATP + H2O + a folded polypeptide = ADP + phosphate + an unfolded polypeptide.. In terms of biological role, together with its co-chaperonin GroES, plays an essential role in assisting protein folding. The GroEL-GroES system forms a nano-cage that allows encapsulation of the non-native substrate proteins and provides a physical environment optimized to promote and accelerate protein folding. This Lactobacillus acidophilus (strain ATCC 700396 / NCK56 / N2 / NCFM) protein is Chaperonin GroEL.